Reading from the N-terminus, the 331-residue chain is Ferredoxin--NADP reductase (331 aa).

FAD contacts are provided by T20, E39, Q47, Y52, V92, F126, D287, and S328.

The protein belongs to the ferredoxin--NADP reductase type 2 family. In terms of assembly, homodimer. Requires FAD as cofactor.

The enzyme catalyses 2 reduced [2Fe-2S]-[ferredoxin] + NADP(+) + H(+) = 2 oxidized [2Fe-2S]-[ferredoxin] + NADPH. The sequence is that of Ferredoxin--NADP reductase from Bacillus cereus (strain ZK / E33L).